The primary structure comprises 247 residues: MEIAMKVERVVAWLREQVEESGTTGLVVGISGGIDSAVVANLIYRAFPNQSLGVILPIRSHQDDIDDGLAVAIACGIKHTTVNLDNEHENVLSKAINALQKLELYDENKLRISDANLRARLRMSTLYTIANNVNSLVVGTDNAAELHTGYFTKYGDGGVDILPIAGLTKREVYQWGEYLGVPQSVLNREPSAGLWEGQTDEKEMGTTYEMIDDFLEGKEVPQKDKEIIERLHGISHHKRVMPPLPNI.

29 to 36 (GISGGIDS) contributes to the ATP binding site. D35 is a Mg(2+) binding site. R120 serves as a coordination point for deamido-NAD(+). Residue T140 coordinates ATP. Position 145 (E145) interacts with Mg(2+). 2 residues coordinate deamido-NAD(+): K153 and D160. The ATP site is built by K169 and S191. Residue 237-238 (HK) participates in deamido-NAD(+) binding.

Belongs to the NAD synthetase family. Homodimer.

It catalyses the reaction deamido-NAD(+) + NH4(+) + ATP = AMP + diphosphate + NAD(+) + H(+). The protein operates within cofactor biosynthesis; NAD(+) biosynthesis; NAD(+) from deamido-NAD(+) (ammonia route): step 1/1. Catalyzes the ATP-dependent amidation of deamido-NAD to form NAD. Uses ammonia as a nitrogen source. The polypeptide is NH(3)-dependent NAD(+) synthetase (Alkaliphilus metalliredigens (strain QYMF)).